A 52-amino-acid chain; its full sequence is Alpha-1-antiproteinase 3 (52 aa).

A disordered region spans residues Glu1–His20.

It belongs to the serpin family. Post-translationally, N-glycosylated; contains glycans with bi- and triantennary side chains. Plasma.

It localises to the secreted. This Equus caballus (Horse) protein is Alpha-1-antiproteinase 3.